The sequence spans 494 residues: Subtilisin-like serine protease EN45_078720 (494 aa).

A signal peptide spans 1-16 (MKGFLSLTLLPLLVAA). Residues 17–136 (SPVAVNSIHN…IEKDSEVRTM (120 aa)) constitute a propeptide, removed in mature form. The Inhibitor I9 domain occupies 43–136 (SYIVVFKKHV…IEKDSEVRTM (94 aa)). Residues 146–448 (PWGLARISHR…GGSANYTKIL (303 aa)) enclose the Peptidase S8 domain. 2 igE-binding regions span residues 180–198 (VIDT…RANW) and 209–231 (EDGN…GVAK). Active-site charge relay system residues include D182 and H214. N244 and N280 each carry an N-linked (GlcNAc...) asparagine glycan. The active-site Charge relay system is S376. Residue N443 is glycosylated (N-linked (GlcNAc...) asparagine). Positions 454-494 (KAHNAETTVEDRIGGIIDSAEKAFHKELGAIYSEIKDAVSA) are cleaved as a propeptide — removed in mature form.

The protein belongs to the peptidase S8 family.

Functionally, serine protease. This chain is Subtilisin-like serine protease EN45_078720, found in Penicillium chrysogenum (Penicillium notatum).